The primary structure comprises 81 residues: Neuronatin (81 aa).

This sequence belongs to the neuronatin family.

Functionally, may participate in the maintenance of segment identity in the hindbrain and pituitary development, and maturation or maintenance of the overall structure of the nervous system. May function as a regulatory subunit of ion channels. This chain is Neuronatin (NNAT), found in Mesocricetus auratus (Golden hamster).